A 258-amino-acid chain; its full sequence is NAD kinase (258 aa).

Asp45 (proton acceptor) is an active-site residue. Residues 45 to 46, 117 to 118, Asp147, Ala155, 158 to 163, and Ala182 contribute to the NAD(+) site; these read DG, NE, and TAYNYS.

It belongs to the NAD kinase family. A divalent metal cation is required as a cofactor.

The protein resides in the cytoplasm. The catalysed reaction is NAD(+) + ATP = ADP + NADP(+) + H(+). Involved in the regulation of the intracellular balance of NAD and NADP, and is a key enzyme in the biosynthesis of NADP. Catalyzes specifically the phosphorylation on 2'-hydroxyl of the adenosine moiety of NAD to yield NADP. This is NAD kinase from Xanthomonas oryzae pv. oryzae (strain MAFF 311018).